The primary structure comprises 150 residues: Lipoprotein signal peptidase (150 aa).

A run of 2 helical transmembrane segments spans residues 58-78 (FFII…FKST) and 85-107 (SFSL…GYVV). Catalysis depends on residues Asp-108 and Asp-122. A helical membrane pass occupies residues 117 to 137 (VFNLADFFITGGVLLLTFLIL).

This sequence belongs to the peptidase A8 family.

It localises to the cell membrane. It catalyses the reaction Release of signal peptides from bacterial membrane prolipoproteins. Hydrolyzes -Xaa-Yaa-Zaa-|-(S,diacylglyceryl)Cys-, in which Xaa is hydrophobic (preferably Leu), and Yaa (Ala or Ser) and Zaa (Gly or Ala) have small, neutral side chains.. Its pathway is protein modification; lipoprotein biosynthesis (signal peptide cleavage). Its function is as follows. This protein specifically catalyzes the removal of signal peptides from prolipoproteins. This Caldicellulosiruptor bescii (strain ATCC BAA-1888 / DSM 6725 / KCTC 15123 / Z-1320) (Anaerocellum thermophilum) protein is Lipoprotein signal peptidase.